We begin with the raw amino-acid sequence, 1063 residues long: Unconventional myosin-Ic (1063 aa).

M1 bears the N-acetylmethionine mark. Residues 47 to 731 enclose the Myosin motor domain; sequence GVQDFVLLEN…TLFATEDALE (685 aa). ATP contacts are provided by residues N88, Y96, 139–148, and 192–196; these read SGESGAGKTE and NDNSS. Residue K383 is modified to N6-methyllysine. S408 carries the post-translational modification Phosphoserine. K486 bears the N6-acetyllysine mark. S536 bears the Phosphoserine mark. The actin-binding stretch occupies residues 608–630; that stretch reads LLELVEILKSKEPAYVRCIKPND. IQ domains are found at residues 734-757 and 758-786; these read RQSL…FLRV and KRSA…AAQT. A phosphoserine mark is found at S864 and S1041. Residues 885–1059 form the TH1 domain; that stretch reads KDNYPQSVPR…NGHLAVVAPR (175 aa).

It belongs to the TRAFAC class myosin-kinesin ATPase superfamily. Myosin family. Interacts (via its IQ motifs) with CABP1 and CIB1; the interaction with CABP1 and CIB1 is calcium-dependent. Interacts (via tail domain) with PLEKHB1 (via PH domain); the interaction is not affected by the presence or absence of calcium and CALM. Interacts with POLR1A. Interacts with POLR2A. Component of the B-WICH complex, at least composed of SMARCA5/SNF2H, BAZ1B/WSTF, SF3B1, DEK, MYO1C, ERCC6, MYBBP1A and DDX21. Interacts (via its IQ motifs) with CALM; this precludes interaction with YWHAB. Interacts with YWHAB; this precludes interaction with CALM. Interacts with RPS6. Interacts with actin. Interacts with LLPH. Interacts with GLUT4. Interacts (via its IQ motifs) with SH3BGRL3; the interaction is dependent on calcium and takes place at membrane ruffles. Post-translationally, isoform 2 contains a N-acetylmethionine at position 1. As to expression, widely expressed.

The protein resides in the cytoplasm. Its subcellular location is the nucleus. It is found in the cell cortex. It localises to the cell projection. The protein localises to the ruffle membrane. The protein resides in the cytoplasmic vesicle. Its subcellular location is the stereocilium membrane. It is found in the nucleolus. It localises to the nucleoplasm. Functionally, myosins are actin-based motor molecules with ATPase activity. Unconventional myosins serve in intracellular movements. Their highly divergent tails are presumed to bind to membranous compartments, which would be moved relative to actin filaments. Involved in glucose transporter recycling in response to insulin by regulating movement of intracellular GLUT4-containing vesicles to the plasma membrane. Component of the hair cell's (the sensory cells of the inner ear) adaptation-motor complex. Acts as a mediator of adaptation of mechanoelectrical transduction in stereocilia of vestibular hair cells. Binds phosphoinositides and links the actin cytoskeleton to cellular membranes. In terms of biological role, isoform 3 is involved in regulation of transcription. Associated with transcriptional active ribosomal genes. Appears to cooperate with the WICH chromatin-remodeling complex to facilitate transcription. Necessary for the formation of the first phosphodiester bond during transcription initiation. The protein is Unconventional myosin-Ic (MYO1C) of Bos taurus (Bovine).